Here is a 106-residue protein sequence, read N- to C-terminus: Large ribosomal subunit protein uL24 (106 aa).

The protein belongs to the universal ribosomal protein uL24 family. In terms of assembly, part of the 50S ribosomal subunit.

Functionally, one of two assembly initiator proteins, it binds directly to the 5'-end of the 23S rRNA, where it nucleates assembly of the 50S subunit. Its function is as follows. One of the proteins that surrounds the polypeptide exit tunnel on the outside of the subunit. In Acidithiobacillus ferrooxidans (strain ATCC 53993 / BNL-5-31) (Leptospirillum ferrooxidans (ATCC 53993)), this protein is Large ribosomal subunit protein uL24.